A 254-amino-acid polypeptide reads, in one-letter code: Sugar fermentation stimulation protein homolog (254 aa).

Belongs to the SfsA family.

The polypeptide is Sugar fermentation stimulation protein homolog (Synechococcus sp. (strain CC9605)).